The following is a 440-amino-acid chain: Xylose isomerase (440 aa).

Residues His-101 and Asp-104 contribute to the active site. Residues Glu-232, Glu-268, His-271, Asp-296, Asp-307, Asp-309, and Asp-339 each coordinate Mg(2+).

It belongs to the xylose isomerase family. In terms of assembly, homotetramer. It depends on Mg(2+) as a cofactor.

The protein localises to the cytoplasm. The catalysed reaction is alpha-D-xylose = alpha-D-xylulofuranose. This is Xylose isomerase from Escherichia coli O17:K52:H18 (strain UMN026 / ExPEC).